The primary structure comprises 144 residues: MVLSRLAASGLLLLALLALSVDGKPVQQWAQSWPGPNIPQLLVQQWAQGGWPRPGPEIPPLTVQQWAQNWPHPQIPPLTVQQWAQGRPPGPPIPPLTVQQWAQARPPHPPIPPAPLQKWAPVQKWAPVQKWAPVQKWAPLLQPT.

Positions 1-23 (MVLSRLAASGLLLLALLALSVDG) are cleaved as a signal peptide. Positions 24-30 (KPVQQWA) are excised as a propeptide. The residue at position 31 (Gln31) is a Pyrrolidone carboxylic acid. A propeptide spanning residues 41-47 (LLVQQWA) is cleaved from the precursor. The residue at position 48 (Gln48) is a Pyrrolidone carboxylic acid. The propeptide occupies 61-67 (LTVQQWA). Gln68 bears the Pyrrolidone carboxylic acid mark. Residues 78–84 (LTVQQWA) constitute a propeptide that is removed on maturation. A disordered region spans residues 81-110 (QQWAQGRPPGPPIPPLTVQQWAQARPPHPP). Gln85 carries the post-translational modification Pyrrolidone carboxylic acid. Residues 96–102 (LTVQQWA) constitute a propeptide that is removed on maturation. A Pyrrolidone carboxylic acid modification is found at Gln103. Residues 114–116 (APL) constitute a propeptide that is removed on maturation. Gln117 is modified (pyrrolidone carboxylic acid). A propeptide is located at residue Val122. Position 123 is a pyrrolidone carboxylic acid (Gln123). Positions 128 to 144 (VQKWAPVQKWAPLLQPT) are excised as a propeptide.

This sequence in the N-terminal section; belongs to the bradykinin-potentiating peptide family. Expressed by venom gland.

The protein resides in the secreted. It localises to the cytoplasm. The protein localises to the cytosol. Peptide with several activities. It inhibits the activity of the angiotensin-converting enzyme (ACE) by a preferential interaction with its C-domain. It evokes transient hypotension (-14 mmHg) similar to that evoked by 0.5 ug of bradykinin, when injected alone into rats. It has a high bradykinin-potentiating effect (120%), when 60 nmol of BPP-10c are coinjected with 0.5 ug of bradykinin into rats. Does not affect angiotensin-1 pressor effects. Shows potent and long-lasting antihypertensive activity as well as a reduction of the heart rate. It also binds and dose-dependently promotes the activation of cytosolic argininosuccinate synthase (ASS1), an enzyme that catalyzes the conversion of citrulline, L-aspartate and ATP to argininosuccinate, AMP and pyrophosphate. It also enhances ASS1-dependent arginine production in HEK 293 cells, as well as in spontaneous hypertensive rat (SHR) and Wistar rat plasma. In addition, it induces the production of nitric-oxide (NO) by HUVEC cells via the endothelial nitric-oxide synthase (NOS3), which use arginine as a substrate and produce NO. It has been shown to be internalized by ASS1-expressing endothelial (HUVEC) and kidney (HEK 293) cells, and is detected homogenously distributed within the cell cytoplasm for up to 2 hours. Its function is as follows. Acts as indirect hypotensive agent. Increases leukocyte rolling flux and adhesion by five-fold in post-capillary venules, without any increments in vasodilation of arterioles. In terms of biological role, acts as indirect hypotensive agent. Potently induces vasodilation of arterioles, with only a small increase in leukocyte rolling flux. The polypeptide is Bradykinin-potentiating and C-type natriuretic peptides isoform 2 (Bothrops jararacussu (Jararacussu)).